Here is a 77-residue protein sequence, read N- to C-terminus: Large ribosomal subunit protein bL31 (77 aa).

This sequence belongs to the bacterial ribosomal protein bL31 family. Type A subfamily. As to quaternary structure, part of the 50S ribosomal subunit.

Binds the 23S rRNA. The chain is Large ribosomal subunit protein bL31 from Paramagnetospirillum magneticum (strain ATCC 700264 / AMB-1) (Magnetospirillum magneticum).